The sequence spans 489 residues: Inositol-pentakisphosphate 2-kinase (489 aa).

The short motif at 136 to 140 is the EXKPK motif element; that stretch reads EIKPK.

It belongs to the IPK1 type 2 family. In brain, it is expressed throughout the hippocampus (CA1, CA2, CA3 and dentate gyrus), inner layers of the cerebral cortex, and Purkinje cells of the cerebellum. In heart, it is expressed in cardiomyocytes but not in interstitial cells, blood vessels, or valves. Also expressed in testis.

It is found in the cytoplasm. It localises to the nucleus. The catalysed reaction is 1D-myo-inositol 1,3,4,5,6-pentakisphosphate + ATP = 1D-myo-inositol hexakisphosphate + ADP + H(+). In terms of biological role, phosphorylates Ins(1,3,4,5,6)P5 at position 2 to form Ins(1,2,3,4,5,6)P6 (InsP6 or phytate). InsP6 is involved in many processes such as mRNA export, non-homologous end-joining, endocytosis, ion channel regulation. It also protects cells from TNF-alpha-induced apoptosis. This Mus musculus (Mouse) protein is Inositol-pentakisphosphate 2-kinase (Ippk).